A 375-amino-acid chain; its full sequence is Aminomethyltransferase (375 aa).

It belongs to the GcvT family. The glycine cleavage system is composed of four proteins: P, T, L and H.

The catalysed reaction is N(6)-[(R)-S(8)-aminomethyldihydrolipoyl]-L-lysyl-[protein] + (6S)-5,6,7,8-tetrahydrofolate = N(6)-[(R)-dihydrolipoyl]-L-lysyl-[protein] + (6R)-5,10-methylene-5,6,7,8-tetrahydrofolate + NH4(+). Its function is as follows. The glycine cleavage system catalyzes the degradation of glycine. The sequence is that of Aminomethyltransferase from Cupriavidus metallidurans (strain ATCC 43123 / DSM 2839 / NBRC 102507 / CH34) (Ralstonia metallidurans).